A 166-amino-acid chain; its full sequence is Interferon gamma (166 aa).

The N-terminal stretch at 1–23 (MNYTSYILAFQLCVILGSSGCYC) is a signal peptide. Pyrrolidone carboxylic acid is present on Gln-24. N-linked (GlcNAc...) asparagine glycosylation is found at Asn-39 and Asn-106. Positions 147-166 (SNLRKRKRRQNQIQGRRASK) are disordered.

It belongs to the type II (or gamma) interferon family. In terms of assembly, homodimer. Interacts with IFNGR1 (via extracellular domain); this interaction promotes IFNGR1 dimerization. As to expression, released primarily from activated T lymphocytes.

It localises to the secreted. Functionally, type II interferon produced by immune cells such as T-cells and NK cells that plays crucial roles in antimicrobial, antiviral, and antitumor responses by activating effector immune cells and enhancing antigen presentation. Primarily signals through the JAK-STAT pathway after interaction with its receptor IFNGR1 to affect gene regulation. Upon IFNG binding, IFNGR1 intracellular domain opens out to allow association of downstream signaling components JAK2, JAK1 and STAT1, leading to STAT1 activation, nuclear translocation and transcription of IFNG-regulated genes. Many of the induced genes are transcription factors such as IRF1 that are able to further drive regulation of a next wave of transcription. Plays a role in class I antigen presentation pathway by inducing a replacement of catalytic proteasome subunits with immunoproteasome subunits. In turn, increases the quantity, quality, and repertoire of peptides for class I MHC loading. Increases the efficiency of peptide generation also by inducing the expression of activator PA28 that associates with the proteasome and alters its proteolytic cleavage preference. Up-regulates as well MHC II complexes on the cell surface by promoting expression of several key molecules such as cathepsins B/CTSB, H/CTSH, and L/CTSL. Participates in the regulation of hematopoietic stem cells during development and under homeostatic conditions by affecting their development, quiescence, and differentiation. The polypeptide is Interferon gamma (IFNG) (Lama glama (Llama)).